The sequence spans 594 residues: MNADFLGLLLLYLAILLCAAPLLGRHIRQAINGERTWLTAWGQPLERGLYRLAGVDPAAEMDWRRYAVAMLVFNVLGVLAVYALQRLQGWLPLNPAGLPGVAPDSALNTAISFVTNTNWQGYAGESTMSYLTQMLALTVQNFVSAATGIAVLIALVRGLARHSAATLGNFWADLVRATLYVLLPLSFILALALVSQGVVQNLDPYVEAQTVQAQQYETARLDAQGQPMTGPAGQPLTDTVVTRVQTLPMGPVASQEAIKLLGTNGGGFFNANSAHPYENPNAWSNLLEMLAILLIPAALCWTFGEMVGSRRQGVAILAAMTVLFAGFAASAAYFEQQPTPALRQAEAALLADGGNLEGKEARFGVAATALFATVTTAASCGAVNGMHDSFSALGGVTPLLQMQLGEVIYGGVGSGLYGMLAFAILAVFIAGLMIGRTPEYLGKKIEALDMQMVALVILATPALVLAGTAVAVLADAGRAGVLNPGAHGFSEILYAMSSAANNNGSAFAGLSANTPFYNVLLGLAMWFGRYTIIVAILALAGSLAAKPRLPASVGGMPTTGPLFVALLVGAVLLVGALTYVPALALGPVAEHLQP.

The next 10 helical transmembrane spans lie at 3-23 (ADFL…APLL), 67-87 (AVAM…LQRL), 136-156 (ALTV…IALV), 179-199 (LYVL…QGVV), 287-307 (LEML…GEMV), 314-334 (VAIL…AAYF), 415-435 (GLYG…LMIG), 453-473 (VALV…VAVL), 519-539 (VLLG…ILAL), and 562-582 (LFVA…YVPA).

Belongs to the KdpA family. In terms of assembly, the system is composed of three essential subunits: KdpA, KdpB and KdpC.

It localises to the cell inner membrane. In terms of biological role, part of the high-affinity ATP-driven potassium transport (or Kdp) system, which catalyzes the hydrolysis of ATP coupled with the electrogenic transport of potassium into the cytoplasm. This subunit binds the periplasmic potassium ions and delivers the ions to the membrane domain of KdpB through an intramembrane tunnel. In Bordetella pertussis (strain Tohama I / ATCC BAA-589 / NCTC 13251), this protein is Potassium-transporting ATPase potassium-binding subunit.